We begin with the raw amino-acid sequence, 109 residues long: Movement protein TGB2 (109 aa).

Residues Met-1 to Phe-9 lie on the Cytoplasmic side of the membrane. The chain crosses the membrane as a helical span at residues Thr-10–Ile-30. The Lumenal portion of the chain corresponds to Arg-31–Lys-72. The chain crosses the membrane as a helical span at residues Ala-73–Ser-93. Residues His-94 to Thr-109 lie on the Cytoplasmic side of the membrane.

It belongs to the Tymovirales TGBp2 protein family.

The protein resides in the host endoplasmic reticulum membrane. In terms of biological role, plays a role in viral cell-to-cell propagation, by facilitating genome transport to neighboring plant cells through plasmosdesmata,. The sequence is that of Movement protein TGB2 from Solanum tuberosum (Potato).